Here is a 338-residue protein sequence, read N- to C-terminus: E3 ubiquitin-protein ligase RING1 (338 aa).

The interval 102–124 (TTTSSSASIDPNNPSLSGPTRSG) is disordered. Residues 110-121 (IDPNNPSLSGPT) are compositionally biased toward polar residues. The RING-type; atypical zinc finger occupies 224-265 (CAVCMDDFEEGTEAKQMPCKHLYHKDCLLPWLELHNSCPVCR). Composition is skewed to basic and acidic residues over residues 267–279 (ELPT…ERRV) and 298–309 (SDGDNRTVERSF). The segment at 267-338 (ELPTDDPDYE…NAETRQEDLD (72 aa)) is disordered.

Auto-ubiquitinated as part of the enzymatic reaction. As to expression, mostly expressed in cotton fibers, and, to a lower extent, in leaves and flowers.

The catalysed reaction is S-ubiquitinyl-[E2 ubiquitin-conjugating enzyme]-L-cysteine + [acceptor protein]-L-lysine = [E2 ubiquitin-conjugating enzyme]-L-cysteine + N(6)-ubiquitinyl-[acceptor protein]-L-lysine.. It functions in the pathway protein modification; protein ubiquitination. Its function is as follows. E3 ubiquitin-protein ligase which accepts ubiquitin from an E2 ubiquitin-conjugating enzyme in the form of a thioester and then directly transfers the ubiquitin to targeted substrates. Promotes polyubiquitination of target proteins. The sequence is that of E3 ubiquitin-protein ligase RING1 (RING1) from Gossypium hirsutum (Upland cotton).